A 133-amino-acid polypeptide reads, in one-letter code: Holo-[acyl-carrier-protein] synthase (133 aa).

Mg(2+) is bound by residues aspartate 8 and glutamate 57.

Belongs to the P-Pant transferase superfamily. AcpS family. It depends on Mg(2+) as a cofactor.

The protein resides in the cytoplasm. It catalyses the reaction apo-[ACP] + CoA = holo-[ACP] + adenosine 3',5'-bisphosphate + H(+). In terms of biological role, transfers the 4'-phosphopantetheine moiety from coenzyme A to a Ser of acyl-carrier-protein. The chain is Holo-[acyl-carrier-protein] synthase from Caulobacter vibrioides (strain ATCC 19089 / CIP 103742 / CB 15) (Caulobacter crescentus).